We begin with the raw amino-acid sequence, 692 residues long: Ino eighty subunit 1 (692 aa).

Basic and acidic residues predominate over residues 1–25; it reads MGKRVYDPIHDTFQLREDNSDETKA. The disordered stretch occupies residues 1–133; sequence MGKRVYDPIH…RHLKKPDGEP (133 aa). S27 carries the post-translational modification Phosphoserine. Positions 28–56 are enriched in polar residues; the sequence is PMQSVKSGSQEEASPSSIQSETETVTTKS. Over residues 64 to 80 the composition is skewed to acidic residues; it reads EIDDKNDDDSTQSEEEN. Residues 97–109 are compositionally biased toward polar residues; sequence GASTATGPVTTNT. The stretch at 340–385 forms a coiled coil; the sequence is SKYVEVESKAQEQDMVDEQNEVKETEAENEKQESKAAYATTLFDIL. The span at 465-485 shows a compositional bias: basic and acidic residues; the sequence is FMSKMEEGRKRERTNVTEVKK. The tract at residues 465 to 550 is disordered; the sequence is FMSKMEEGRK…VTPAAPTETE (86 aa). Residues S487, S493, and S504 each carry the phosphoserine modification. Residues 493-504 are compositionally biased toward acidic residues; that stretch reads SEEDGEGEDDKS. The residue at position 507 (T507) is a Phosphothreonine. The segment covering 513–528 has biased composition (polar residues); it reads SLLTPTPILESSSPMT.

Component of the chromatin-remodeling INO80 complex, at least composed of ARP4, ARP5, ARP8, RVB1, RVB2, TAF14, NHP10, IES1, IES3, IES4, IES6, ACT1, IES2, IES5 and INO80.

The protein resides in the nucleus. In terms of biological role, probably involved in transcription regulation via its interaction with the INO80 complex, a chromatin-remodeling complex. The chain is Ino eighty subunit 1 (IES1) from Saccharomyces cerevisiae (strain ATCC 204508 / S288c) (Baker's yeast).